The sequence spans 149 residues: Large ribosomal subunit protein bL9 (149 aa).

Belongs to the bacterial ribosomal protein bL9 family.

Functionally, binds to the 23S rRNA. The sequence is that of Large ribosomal subunit protein bL9 from Geobacillus kaustophilus (strain HTA426).